Here is a 1002-residue protein sequence, read N- to C-terminus: Leucine-rich repeat receptor-like serine/threonine-protein kinase BAM2 (1002 aa).

A signal peptide spans M1–A22. The Extracellular portion of the chain corresponds to K23–T636. N-linked (GlcNAc...) asparagine glycans are attached at residues N51, N80, N97, N123, N130, N153, and N164. 22 LRR repeats span residues L68–L92, P93–L116, E118–G140, L141–L165, Q167–T188, W189–L213, T215–L238, S239–L262, Q263–L285, I286–Q309, K311–M334, P335–N358, G359–G382, R384–C406, E407–L430, P431–G456, L458–L479, S480–L503, Q505–C527, K528–M551, K552–M575, and S577–Y600. Residues N212 and N237 are each glycosylated (N-linked (GlcNAc...) asparagine). N312 and N346 each carry an N-linked (GlcNAc...) asparagine glycan. N-linked (GlcNAc...) asparagine glycosylation occurs at N420. N-linked (GlcNAc...) asparagine glycosylation is present at N478. Residues N558, N587, and N602 are each glycosylated (N-linked (GlcNAc...) asparagine). A helical membrane pass occupies residues K637–I657. Residues K658–N1002 lie on the Cytoplasmic side of the membrane. At T682 the chain carries Phosphothreonine. One can recognise a Protein kinase domain in the interval L690–I967. ATP-binding positions include I696–V704 and K718. Y765 and Y803 each carry phosphotyrosine. D816 (proton acceptor) is an active-site residue. Position 851 is a phosphoserine (S851). A phosphotyrosine mark is found at Y859 and Y866. Position 867 is a phosphothreonine (T867). Residues L969 to N1002 are disordered. Positions S989–N1002 are enriched in low complexity.

It belongs to the protein kinase superfamily. Ser/Thr protein kinase family. As to quaternary structure, interacts with BAM1 and CLV1. Binds to the CLV3, CLE11, CLE18, CLE19, CLE22, CLE25, CLE26, CLE40, CLE41 and CLE42 mature peptides, probably via its extracellular leucine-rich repeat region. As to expression, expressed in seedlings, roots, rosette leaves, stems, inflorescences, flowers and siliques.

It is found in the cell membrane. It catalyses the reaction L-seryl-[protein] + ATP = O-phospho-L-seryl-[protein] + ADP + H(+). The enzyme catalyses L-threonyl-[protein] + ATP = O-phospho-L-threonyl-[protein] + ADP + H(+). Its function is as follows. Necessary for male gametophyte development, as well as ovule specification and function. Involved in cell-cell communication process required during early anther development, and regulating cell division and differentiation to organize cell layers. Required for the development of high-ordered vascular strands within the leaf and a correlated control of leaf shape, size and symmetry. May regulate the CLV1-dependent CLV3-mediated signaling in meristems maintenance. This Arabidopsis thaliana (Mouse-ear cress) protein is Leucine-rich repeat receptor-like serine/threonine-protein kinase BAM2 (BAM2).